We begin with the raw amino-acid sequence, 519 residues long: Serine/threonine-protein kinase RIO3 (519 aa).

A phosphoserine mark is found at Ser-8 and Ser-112. Residues 121–159 (PYEDSDSSEDEVDWQDTRDDPYRPAKPVPTPKKGFIGKG) form a disordered region. Tyr-122 carries the phosphotyrosine modification. Acidic residues predominate over residues 124 to 134 (DSDSSEDEVDW). Phosphoserine occurs at positions 125, 127, and 128. The Protein kinase domain occupies 251–519 (ETITGCISTG…DGDPPLLYDE (269 aa)). Residues 257–265 (ISTGKESVV) and Lys-290 contribute to the ATP site. Residue Asp-406 is the Proton acceptor of the active site.

The protein belongs to the protein kinase superfamily. RIO-type Ser/Thr kinase family. Interacts with CASP10. Interacts with IRF3; RIOK3 probably mediates the interaction of TBK1 with IRF3. Associated with 40S pre-ribosomal particles. Requires Mg(2+) as cofactor. Post-translationally, autophosphorylated (in vitro). Widely expressed.

It localises to the cytoplasm. The catalysed reaction is L-seryl-[protein] + ATP = O-phospho-L-seryl-[protein] + ADP + H(+). It carries out the reaction L-threonyl-[protein] + ATP = O-phospho-L-threonyl-[protein] + ADP + H(+). In terms of biological role, involved in regulation of type I interferon (IFN)-dependent immune response which plays a critical role in the innate immune response against DNA and RNA viruses. May act as an adapter protein essential for the recruitment of TBK1 to IRF3. Phosphorylates IFIH1 on 'Ser-828' interfering with IFIH1 filament assembly on long dsRNA and resulting in attenuated IFIH1-signaling. Can inhibit CASP10 isoform 7-mediated activation of the NF-kappaB signaling pathway. May play a role in the biogenesis of the 40S ribosomal subunit. Involved in the processing of 21S pre-rRNA to the mature 18S rRNA. The sequence is that of Serine/threonine-protein kinase RIO3 (RIOK3) from Homo sapiens (Human).